The chain runs to 305 residues: Glutaminase (305 aa).

Substrate is bound by residues Ser61, Asn113, Glu158, Asn165, Tyr189, Tyr241, and Val259.

It belongs to the glutaminase family. In terms of assembly, homotetramer.

The enzyme catalyses L-glutamine + H2O = L-glutamate + NH4(+). The chain is Glutaminase from Clostridium botulinum (strain Loch Maree / Type A3).